A 679-amino-acid polypeptide reads, in one-letter code: MAPKMVISLGSSRRRKRGEMLFRFEAFCQPGYPANFAGAGGFRDNVRTLLGFAHLEAGVHGETKCWSFQLELHRHPPTVVRLFVVEEEVAASPHRQCHLCRHIGWGRHLICSKRYHFLLPRRESAAEADGLCFAINHGGGGGAEKASSKGTTTTASSRGHLLHGVVHLNGYGHLVALHGLEGGSDFVSGHQIMDLWDRICSALHVRTVSLVDTARKGHMELRLLHGVAYGETWFGRWGYRYGRPSYGVALPSYRQSLHVLGSMPLCVLVPHLSCFSQELPMVVTKYQAISGHKLLSLGDLLRFMLELRARLPATSVTAMDYRGIMSEASCRWSAKRVDMAARAVVDALRRAEPAARWVTRQEVRDAARAYIGDTGLLDFVLKSLGNHIVGNYVVRRTMNPVTKVLEYCLEDVSSVLPAVAAGGGVPAQGKMRVRFQLTRAQLMRDLVHLYRHVLKEPSQALTGGAFGAIPVAVRMVLDIKHFVKDYHEGQAAASSNGGGGFGHPHINLCCTLLVSNGSPELAPPYETVTLPAHATVGELKWEAQRVFSEMYLGLRSFAADSVVGVGADQEGLPVLGLVDVGSAVVVQGSVGEQINGEDHERKEEAAAAAVCEGSGGGERVVDCACGAVDDDGERMACCDICEAWQHTRCAGIADTEDAPHVFLCSRCDNDVVSFPSFNC.

Residues 620 to 670 (VVDCACGAVDDDGERMACCDICEAWQHTRCAGIADTEDAPHVFLCSRCDND) form a PHD-type zinc finger.

Its function is as follows. Probable transcriptional activator required for tapetal programmed cell death (PCD) and degeneration, and pollen development in anthers. The chain is PHD finger protein PERSISTENT TAPETAL CELL 1 from Oryza sativa subsp. japonica (Rice).